Reading from the N-terminus, the 213-residue chain is Ras-related protein Rab-39B (213 aa).

Residues serine 17, glycine 20, lysine 21, serine 22, cysteine 23, serine 37, and threonine 40 each coordinate GTP. Position 22 (serine 22) interacts with Mg(2+). The tract at residues 35 to 43 (QVSDPTVGV) is switch-I. 2 residues coordinate Mg(2+): threonine 40 and aspartate 64. Glycine 67, histidine 123, lysine 124, aspartate 126, alanine 154, and arginine 155 together coordinate GTP. The segment at 67–83 (GQERFRSITRAYYRNSV) is switch-II. A Phosphoserine modification is found at serine 201. 2 S-geranylgeranyl cysteine lipidation sites follow: cysteine 211 and cysteine 213. Cysteine methyl ester is present on cysteine 213.

This sequence belongs to the small GTPase superfamily. Rab family. Interacts (GDP-bound) with C9orf72; C9orf72 in complex with SMCR8 acts as a GEF for RAB39B. Interacts (in GTP-bound form) with PICK1 (via PDZ domain); a PICK1 homodimer may allow simultaneous association of RAB39B and GRIA2 to PICK1 which is involved in GRIA2 trafficking. Interacts with isoform c of RASSF1; the interaction is strong. Interacts with isoform a of RASSF1; the interaction is weak. Interacts with the DLG4/PSD-95. Interacts (GTP-bound) with HOPS complex components VPS39 and VPS41. The cofactor is Mg(2+). Specifically expressed in neuron and neuronal precursors in the brain. Expression is high in all regions of the brain with highest levels observed in the hippocampus.

The protein resides in the cell membrane. It is found in the cytoplasmic vesicle membrane. The protein localises to the golgi apparatus. It localises to the cytoplasmic vesicle. Its subcellular location is the autophagosome membrane. The protein resides in the autolysosome membrane. The catalysed reaction is GTP + H2O = GDP + phosphate + H(+). Regulated by guanine nucleotide exchange factors (GEFs) including C9orf72-SMCR8 complex, which promote the exchange of bound GDP for free GTP. Regulated by GTPase activating proteins (GAPs) which increase the GTP hydrolysis activity. Inhibited by GDP dissociation inhibitors (GDIs). Its function is as follows. The small GTPases Rab are key regulators of intracellular membrane trafficking, from the formation of transport vesicles to their fusion with membranes. Rabs cycle between an inactive GDP-bound form and an active GTP-bound form that is able to recruit to membranes different sets of downstream effectors directly responsible for vesicle formation, movement, tethering and fusion. RAB39B is involved in autophagy and may function in autophagosome formation. Binds downstream effector PICK1 to ensure selectively GRIA2 exit from the endoplasmic reticulum to the Golgi and to regulate AMPAR composition at the post-synapses and thus synaptic transmission. May regulate the homeostasis of SNCA/alpha-synuclein. This is Ras-related protein Rab-39B from Mus musculus (Mouse).